A 445-amino-acid polypeptide reads, in one-letter code: 3-phosphoshikimate 1-carboxyvinyltransferase (445 aa).

The segment covering 1 to 20 (MSSTHPGRTIRSGATQNLSG) has biased composition (polar residues). The interval 1 to 24 (MSSTHPGRTIRSGATQNLSGTIRP) is disordered. 3-phosphoshikimate-binding residues include Lys28, Ser29, and Arg33. Lys28 is a phosphoenolpyruvate binding site. Phosphoenolpyruvate-binding residues include Gly101 and Arg129. Residues Ser174, Gln176, Asp322, and Lys349 each contribute to the 3-phosphoshikimate site. Gln176 lines the phosphoenolpyruvate pocket. Asp322 (proton acceptor) is an active-site residue. Residues Arg353 and Arg397 each coordinate phosphoenolpyruvate.

It belongs to the EPSP synthase family. In terms of assembly, monomer.

Its subcellular location is the cytoplasm. It catalyses the reaction 3-phosphoshikimate + phosphoenolpyruvate = 5-O-(1-carboxyvinyl)-3-phosphoshikimate + phosphate. Its pathway is metabolic intermediate biosynthesis; chorismate biosynthesis; chorismate from D-erythrose 4-phosphate and phosphoenolpyruvate: step 6/7. Catalyzes the transfer of the enolpyruvyl moiety of phosphoenolpyruvate (PEP) to the 5-hydroxyl of shikimate-3-phosphate (S3P) to produce enolpyruvyl shikimate-3-phosphate and inorganic phosphate. This chain is 3-phosphoshikimate 1-carboxyvinyltransferase, found in Magnetococcus marinus (strain ATCC BAA-1437 / JCM 17883 / MC-1).